The sequence spans 235 residues: Segregation and condensation protein A (235 aa).

The protein belongs to the ScpA family. As to quaternary structure, component of a cohesin-like complex composed of ScpA, ScpB and the Smc homodimer, in which ScpA and ScpB bind to the head domain of Smc. The presence of the three proteins is required for the association of the complex with DNA.

The protein localises to the cytoplasm. Its function is as follows. Participates in chromosomal partition during cell division. May act via the formation of a condensin-like complex containing Smc and ScpB that pull DNA away from mid-cell into both cell halves. This chain is Segregation and condensation protein A, found in Streptococcus agalactiae serotype III (strain NEM316).